Here is a 542-residue protein sequence, read N- to C-terminus: Glucans biosynthesis protein G (542 aa).

Residues 1–34 (MVSLLRCPSSKPYSSLICSLTLGAVVALSGVAYA) form the signal peptide.

The protein belongs to the OpgD/OpgG family.

It is found in the periplasm. It participates in glycan metabolism; osmoregulated periplasmic glucan (OPG) biosynthesis. Involved in the biosynthesis of osmoregulated periplasmic glucans (OPGs). In Shewanella baltica (strain OS155 / ATCC BAA-1091), this protein is Glucans biosynthesis protein G.